The following is a 134-amino-acid chain: Small ribosomal subunit protein uS11 (134 aa).

Belongs to the universal ribosomal protein uS11 family. In terms of assembly, part of the 30S ribosomal subunit. Interacts with proteins S7 and S18. Binds to IF-3.

Functionally, located on the platform of the 30S subunit, it bridges several disparate RNA helices of the 16S rRNA. Forms part of the Shine-Dalgarno cleft in the 70S ribosome. The chain is Small ribosomal subunit protein uS11 from Corynebacterium glutamicum (strain R).